A 244-amino-acid chain; its full sequence is Ribosomal RNA small subunit methyltransferase G (244 aa).

S-adenosyl-L-methionine-binding positions include Gly79, Phe84, 102–104 (DST), 130–131 (AE), and Arg149. Residues 225-244 (DRYPRREGVPNQQPLFWSAK) form a disordered region. Polar residues predominate over residues 234–244 (PNQQPLFWSAK).

Belongs to the methyltransferase superfamily. RNA methyltransferase RsmG family.

The protein localises to the cytoplasm. Its function is as follows. Specifically methylates the N7 position of a guanine in 16S rRNA. In Deinococcus deserti (strain DSM 17065 / CIP 109153 / LMG 22923 / VCD115), this protein is Ribosomal RNA small subunit methyltransferase G.